Consider the following 230-residue polypeptide: MKKKKALPSFLYLVFIVLLPWGVSFSFNKCLELWIKNWWNTRQSQTLLTAIQEKRVLERFMELEDLFILDEMIKEKPNTHVQNPPIGIRKEIIQLAKIDNEGHLHIILHFSTNIICLAILSGSFFLGKEELVILNSWVQEFFYNLNDSVKAFFILLVTDFFVGFHSTRGWELLIRWVYNDLGWVPNELIFTIFVCSFPVILDTCLKFWVFFCLNRLSPSLVVIYHSISEA.

4 consecutive transmembrane segments (helical) span residues 7-27, 106-126, 145-165, and 181-201; these read LPSF…SFSF, IILH…SFFL, LNDS…VGFH, and LGWV…PVIL.

Belongs to the CemA family.

It localises to the plastid. Its subcellular location is the chloroplast inner membrane. It carries out the reaction K(+)(in) + H(+)(out) = K(+)(out) + H(+)(in). Its function is as follows. Contributes to K(+)/H(+) antiport activity by supporting proton efflux to control proton extrusion and homeostasis in chloroplasts in a light-dependent manner to modulate photosynthesis. Prevents excessive induction of non-photochemical quenching (NPQ) under continuous-light conditions. Indirectly promotes efficient inorganic carbon uptake into chloroplasts. In Oryza nivara (Indian wild rice), this protein is Potassium/proton antiporter CemA.